Reading from the N-terminus, the 262-residue chain is Phosphatidylglycerol--prolipoprotein diacylglyceryl transferase (262 aa).

4 helical membrane passes run 9–29 (LGPLAIRWYALCIVTGLILAV), 41–61 (IIPDDILDFILVAFPLAILGA), 80–100 (IFAIWNGGLAIYGGLITGALV), and 109–129 (LINTWDFLDIAAPSVMIAQSL). Residue arginine 131 participates in a 1,2-diacyl-sn-glycero-3-phospho-(1'-sn-glycerol) binding. 3 helical membrane passes run 167-187 (QPTFLYESLWNLLGFALILIF), 197-217 (GHITAFYLIWYGFGRMVIEGM), and 227-247 (LRVSQWLSVVLIGLGIMIVIY).

Belongs to the Lgt family.

The protein resides in the cell membrane. It carries out the reaction L-cysteinyl-[prolipoprotein] + a 1,2-diacyl-sn-glycero-3-phospho-(1'-sn-glycerol) = an S-1,2-diacyl-sn-glyceryl-L-cysteinyl-[prolipoprotein] + sn-glycerol 1-phosphate + H(+). The protein operates within protein modification; lipoprotein biosynthesis (diacylglyceryl transfer). Catalyzes the transfer of the diacylglyceryl group from phosphatidylglycerol to the sulfhydryl group of the N-terminal cysteine of a prolipoprotein, the first step in the formation of mature lipoproteins. This chain is Phosphatidylglycerol--prolipoprotein diacylglyceryl transferase, found in Streptococcus pneumoniae (strain JJA).